Here is a 723-residue protein sequence, read N- to C-terminus: Bifunctional lysine-specific demethylase and histidyl-hydroxylase NO66 (723 aa).

Disordered regions lie at residues 13–34 (KKTAKKPAKKTTKQNRQKQKAA) and 48–213 (SAVK…APSC). Positions 14-31 (KTAKKPAKKTTKQNRQKQ) are enriched in basic residues. The segment covering 49–72 (AVKQNNGAKGKAKANGVKGNAKAQ) has biased composition (low complexity). Acidic residues-rich tracts occupy residues 88-106 (ESVDDYSSDSSYDEDEDNE) and 114-129 (EDDYGSELSSGEEFEE). The segment covering 133 to 155 (NSPSGSCSCSASSGSSNTENSPP) has biased composition (low complexity). A compositionally biased stretch (basic and acidic residues) spans 190–199 (EQKEGKELSK). Residues 204-213 (KSAPAAAPSC) show a composition bias toward low complexity. The region spanning 379 to 518 (NPSTYLKGLR…NLMEALMPAV (140 aa)) is the JmjC domain. Fe cation contacts are provided by histidine 419, aspartate 421, and histidine 484.

The protein belongs to the ROX family. NO66 subfamily. Fe(2+) is required as a cofactor.

It is found in the nucleus. It catalyses the reaction N(6),N(6)-dimethyl-L-lysyl(36)-[histone H3] + 2 2-oxoglutarate + 2 O2 = L-lysyl(36)-[histone H3] + 2 formaldehyde + 2 succinate + 2 CO2. Functionally, oxygenase that can act as both a histone lysine demethylase and a ribosomal histidine hydroxylase. Specifically demethylates 'Lys-4' (H3K4me) and 'Lys-36' (H3K36me) of histone H3, thereby playing a central role in histone code. The polypeptide is Bifunctional lysine-specific demethylase and histidyl-hydroxylase NO66 (Drosophila grimshawi (Hawaiian fruit fly)).